Reading from the N-terminus, the 167-residue chain is S-ribosylhomocysteine lyase (167 aa).

Fe cation is bound by residues His54, His58, and Cys128.

It belongs to the LuxS family. As to quaternary structure, homodimer. Fe cation serves as cofactor.

It catalyses the reaction S-(5-deoxy-D-ribos-5-yl)-L-homocysteine = (S)-4,5-dihydroxypentane-2,3-dione + L-homocysteine. In terms of biological role, involved in the synthesis of autoinducer 2 (AI-2) which is secreted by bacteria and is used to communicate both the cell density and the metabolic potential of the environment. The regulation of gene expression in response to changes in cell density is called quorum sensing. Catalyzes the transformation of S-ribosylhomocysteine (RHC) to homocysteine (HC) and 4,5-dihydroxy-2,3-pentadione (DPD). The polypeptide is S-ribosylhomocysteine lyase (Haemophilus influenzae (strain PittEE)).